Here is a 67-residue protein sequence, read N- to C-terminus: MTTYDRNRNAITTGSRVMVSGTGHTGKILSIDTEGLTAEQIRRGKTVVVEGCEEKLAPLDLIRLGMN.

C52 is subject to S-selanylcysteine.

The polypeptide is Putative selenoprotein YdfZ (ydfZ) (Escherichia coli O6:H1 (strain CFT073 / ATCC 700928 / UPEC)).